Here is a 135-residue protein sequence, read N- to C-terminus: uncharacterized protein (135 aa).

In terms of domain architecture, HotDog ACOT-type spans 8–123; it reads PQGTIVLKTL…IFIYVAIDET (116 aa).

Belongs to the acyl coenzyme A hydrolase family.

This is an uncharacterized protein from Buchnera aphidicola subsp. Schizaphis graminum (strain Sg).